Here is a 998-residue protein sequence, read N- to C-terminus: MGQASSHSENDLFISHLKESLKVRRIRVRKKDLVSFFSFIFKTCPWFPQEGSIDSRVWGRVGDCLNDYYRVFGPETIPITTFNYYNLIRDVLTNQSDSPDIQRLCKEGHKILISHSRPPSRQAPVTITTSEKASSRPPSRAPSTCPSVAIDIGSHDTGQSSLYPNLATLTDPPIQSPHSRAHTPPQHLPLLANSKTLHNSGSQDDQLNPADQADLEEAAAQYNNPDWPQLTNTPALPPFRPPSYVSTAVPPVAVAAPVLHAPTSGVPGSPTAPNLPGVALAKPSGPIDETVSLLDGVKTLVTKLSDLALLPPAGVMAFPVTRSQGQVSSNTTGRASPHPDTHTIPEEEEADSGESDSEDDEEESSEPTEPTYTHSYKRLNLKTIEKIKTAVANYGPTAPFTVALVESLSERWLTPSDWFFLSRAALSGGDNILWKSEYEDISKQFAERTRVRPPPKDGPLKIPGASPYQNNDKQAQFPPGLLTQIQSAGLKAWKRLPQKGAATTSLAKIRQGPDESYSDFVSRLQETADRLFGSGESESSFVKHLAYENANPACQSAIRPFRQKELSTMSPLLWYCSAHAVGLAIGAALQNLAPAQLLEPRPAFAIIVTNPAIFQETAPKKIQPPTQLPTQPNAPQASLIKNLGPTTKCPRCKKGFHWASECRSRLDINGQPIIKQGNLEQGPAPGPHYRDELRGFTVHPPIPPANPCPPSNQPRRYVTDLWRATAGSAGLDLCTTTDTILTTQNSPLTLPVGIYGPLPPQTFGLILAEPALPSKGIQVLPGILDNDFEGEIHIILSTTKDLVTIPKGTRLAQIVILPLQQINSNFHKPYRGASAPGSSDVYWVQQISQQRPTLKLKLNGKLFSGILDTGADATVISYTHWPRNWPLTTVATHLRGIGQATNPQQSAQMLKWEDSEGNNGHITPYVLPNLPVNLWGRDILSQMKLVMCSPNDTVMTQMLSQGYLPGQGLGKNNQGITQPITITPKKDKTGLGFHQNLP.

The N-myristoyl glycine; by host moiety is linked to residue G2. Disordered stretches follow at residues 115–208 (HSRP…DQLN), 323–376 (SQGQ…THSY), and 446–469 (AERT…SPYQ). Composition is skewed to polar residues over residues 117–132 (RPPS…TSEK), 193–206 (NSKT…QDDQ), and 323–334 (SQGQVSSNTTGR). Residues 346–366 (EEEEADSGESDSEDDEEESSE) are compositionally biased toward acidic residues. Over residues 446–459 (AERTRVRPPPKDGP) the composition is skewed to basic and acidic residues. The Peptidase A2 domain occupies 863–939 (FSGILDTGAD…LPVNLWGRDI (77 aa)). Catalysis depends on D868, which acts as the Protease; shared with dimeric partner. Residues 950–996 (PNDTVMTQMLSQGYLPGQGLGKNNQGITQPITITPKKDKTGLGFHQN) form the G-patch domain.

As to quaternary structure, homodimer. Interacts with the reverse transcriptase/ribonuclease H. Nucleocapsid protein-dUTPase: Homotrimer. In terms of assembly, homotrimer. In terms of processing, myristoylated. Myristoylation of the matrix (MA) domain mediates the transport and binding of Gag polyproteins to the host plasma membrane and is required for the assembly of viral particles. Post-translationally, specific enzymatic cleavages in vivo yield mature proteins.

The protein localises to the virion. It carries out the reaction dUTP + H2O = dUMP + diphosphate + H(+). Functionally, matrix protein p10: Matrix protein. Nucleocapsid protein p14: Nucleocapsid protein. Its function is as follows. Capsid protein p27: capsid protein. In terms of biological role, the aspartyl protease mediates proteolytic cleavages of Gag and Gag-Pol polyproteins during or shortly after the release of the virion from the plasma membrane. Cleavages take place as an ordered, step-wise cascade to yield mature proteins. This process is called maturation. Displays maximal activity during the budding process just prior to particle release from the cell. Functionally, enhances the activity of the reverse transcriptase. May be part of the mature RT. The polypeptide is Gag-Pro polyprotein (pro) (Mammalia (SMRV-H)).